Reading from the N-terminus, the 182-residue chain is Gremlin-1 (182 aa).

Residues methionine 1 to glycine 24 form the signal peptide. The disordered stretch occupies residues glutamate 23–alanine 65. Asparagine 44 carries an N-linked (GlcNAc...) asparagine glycan. Cystine bridges form between cysteine 92/cysteine 142, cysteine 106/cysteine 156, cysteine 116/cysteine 174, and cysteine 120/cysteine 176. The CTCK domain occupies cysteine 92–aspartate 182.

This sequence belongs to the DAN family.

Its subcellular location is the secreted. Its function is as follows. Cytokine that has an axial patterning activity. Acts like BMP antagonist in embryonic explants. Blocks the BMP2 activity. The protein is Gremlin-1 (grem1) of Xenopus laevis (African clawed frog).